A 286-amino-acid polypeptide reads, in one-letter code: MTTAATAAAIVTAGSVRFGNDLPLAVIAGPCQLESRGHALEVASALKEIATRLNIGLVYKTSFDKANRTSGSAARGLGLAQSLPIFAEIRSSLGLPVLTDIHDASQCAEVAQAVDVLQIPAFLCRQTDLLLAAAATGKVVNVKKGQFLAPWDMANVVAKITGAGNPNVLATERGVSFGYNTLISDMRSLPIMARTTGAPVIFDATHSVQQPGGQGTSSGGQREFVPVLARAAVAVGVAGVFIETHPDPDHAPSDGPNMVPLAEFEGLLRRLMAFDKLAKAPATDTR.

This sequence belongs to the KdsA family.

The protein resides in the cytoplasm. It catalyses the reaction D-arabinose 5-phosphate + phosphoenolpyruvate + H2O = 3-deoxy-alpha-D-manno-2-octulosonate-8-phosphate + phosphate. The protein operates within carbohydrate biosynthesis; 3-deoxy-D-manno-octulosonate biosynthesis; 3-deoxy-D-manno-octulosonate from D-ribulose 5-phosphate: step 2/3. It participates in bacterial outer membrane biogenesis; lipopolysaccharide biosynthesis. The polypeptide is 2-dehydro-3-deoxyphosphooctonate aldolase (Bradyrhizobium sp. (strain BTAi1 / ATCC BAA-1182)).